Reading from the N-terminus, the 95-residue chain is MSIKPLHDRVVVKPIEADEISAGGIVIPDSAKEKSTKGEVVAVGPGKPLDNGNVRAPSLKVGDKVIYGQYAGSSYKSEGVEYKVLREDDVLAVIG.

It belongs to the GroES chaperonin family. In terms of assembly, heptamer of 7 subunits arranged in a ring. Interacts with the chaperonin GroEL.

The protein localises to the cytoplasm. In terms of biological role, together with the chaperonin GroEL, plays an essential role in assisting protein folding. The GroEL-GroES system forms a nano-cage that allows encapsulation of the non-native substrate proteins and provides a physical environment optimized to promote and accelerate protein folding. GroES binds to the apical surface of the GroEL ring, thereby capping the opening of the GroEL channel. The sequence is that of Co-chaperonin GroES from Stenotrophomonas maltophilia (strain K279a).